The sequence spans 348 residues: MAIPETQKGVIFYEHGGELQYKDIPVPKPKPNELLINVKYSGVCHTDLHAWQGDWPLDTKLPLVGGHEGAGIVVAMGENVTGWEIGDYAGIKWLNGSCMSCEECELSNEPNCPKADLSGYTHDGSFQQYATADAVQAARIPKNVDLAEVAPILCAGVTVYKALKSAHIKAGDWVAISGACGGLGSLAIQYAKAMGYRVLGIDAGDEKAKLFKELGGEYFIDFTKTKDMVAEVIEATNGVAHAVINVSVSEAAISTSVLYTRSNGTVVLVGLPRDAQCKSDVFNQVVKSISIVGSYVGNRADTREALDFFSRGLVKAPIKILGLSELASVYDKMVKGQIVGRIVVDTSK.

The Zn(2+) site is built by Cys44, His67, Cys98, Cys101, Cys104, Cys112, and Cys154. NAD(+)-binding positions include 178-184 (GACGGLG), Asp202, Lys207, 269-271 (VGL), and Arg341.

It belongs to the zinc-containing alcohol dehydrogenase family. As to quaternary structure, homotetramer. The cofactor is Zn(2+).

It is found in the cytoplasm. The catalysed reaction is a primary alcohol + NAD(+) = an aldehyde + NADH + H(+). It carries out the reaction a secondary alcohol + NAD(+) = a ketone + NADH + H(+). This chain is Alcohol dehydrogenase 1 (ADH1), found in Kluyveromyces marxianus (Yeast).